Reading from the N-terminus, the 534-residue chain is CTP synthase (534 aa).

Positions 1–267 (MTKYIFVTGG…DQIVCDHLKL (267 aa)) are amidoligase domain. CTP is bound at residue Ser-13. Ser-13 contributes to the UTP binding site. Position 14–19 (14–19 (SIGKGI)) interacts with ATP. Tyr-54 contacts L-glutamine. Residue Asp-71 participates in ATP binding. Residues Asp-71 and Glu-141 each contribute to the Mg(2+) site. Residues 148–150 (DIE), 188–193 (KTKPTQ), and Lys-224 each bind CTP. UTP contacts are provided by residues 188–193 (KTKPTQ) and Lys-224. 240–242 (RDV) contributes to the ATP binding site. One can recognise a Glutamine amidotransferase type-1 domain in the interval 292-534 (KIALVGKYVE…FVTAAIKNSN (243 aa)). L-glutamine is bound at residue Gly-354. The Nucleophile; for glutamine hydrolysis role is filled by Cys-381. Residues 382-385 (LGMQ), Glu-405, and Arg-463 contribute to the L-glutamine site. Catalysis depends on residues His-508 and Glu-510.

Belongs to the CTP synthase family. As to quaternary structure, homotetramer.

The catalysed reaction is UTP + L-glutamine + ATP + H2O = CTP + L-glutamate + ADP + phosphate + 2 H(+). The enzyme catalyses L-glutamine + H2O = L-glutamate + NH4(+). It carries out the reaction UTP + NH4(+) + ATP = CTP + ADP + phosphate + 2 H(+). It functions in the pathway pyrimidine metabolism; CTP biosynthesis via de novo pathway; CTP from UDP: step 2/2. Allosterically activated by GTP, when glutamine is the substrate; GTP has no effect on the reaction when ammonia is the substrate. The allosteric effector GTP functions by stabilizing the protein conformation that binds the tetrahedral intermediate(s) formed during glutamine hydrolysis. Inhibited by the product CTP, via allosteric rather than competitive inhibition. Catalyzes the ATP-dependent amination of UTP to CTP with either L-glutamine or ammonia as the source of nitrogen. Regulates intracellular CTP levels through interactions with the four ribonucleotide triphosphates. In Streptococcus pyogenes serotype M1, this protein is CTP synthase.